A 312-amino-acid chain; its full sequence is Ribosomal RNA small subunit methyltransferase H (312 aa).

S-adenosyl-L-methionine-binding positions include 34–36 (AGH), Asp-54, Phe-81, Asp-102, and Gln-109.

Belongs to the methyltransferase superfamily. RsmH family.

It localises to the cytoplasm. The catalysed reaction is cytidine(1402) in 16S rRNA + S-adenosyl-L-methionine = N(4)-methylcytidine(1402) in 16S rRNA + S-adenosyl-L-homocysteine + H(+). Specifically methylates the N4 position of cytidine in position 1402 (C1402) of 16S rRNA. The polypeptide is Ribosomal RNA small subunit methyltransferase H (Geobacter sp. (strain M21)).